The primary structure comprises 243 residues: Myelin protein P0 (243 aa).

Residues 1–26 (MESSGLRAPCSLLVLLSALVLPPTLA) form the signal peptide. Residues 27-141 (IEVYTDREVY…VGKSSYVHLQ (115 aa)) form the Ig-like V-type domain. Residues 27–154 (IEVYTDREVY…KGAARAGLVL (128 aa)) are Extracellular-facing. An intrachain disulfide couples C47 to C123. N-linked (GlcNAc...) asparagine glycosylation occurs at N118. Residues 155 to 175 (GIIIAVALALVIVVTILILLI) traverse the membrane as a helical segment. At 176-243 (RYCWLRRQVR…GIGDSRKDRK (68 aa)) the chain is on the cytoplasmic side. Residues 201–243 (AKDSSKRSSRQTPILYAMLDQTRGKASEKKGKGGIGDSRKDRK) are disordered. Residues 222-243 (TRGKASEKKGKGGIGDSRKDRK) show a composition bias toward basic and acidic residues.

This sequence belongs to the myelin P0 protein family.

The protein localises to the cell membrane. Creation of an extracellular membrane face which guides the wrapping process and ultimately compacts adjacent lamellae. This chain is Myelin protein P0 (mpz), found in Xenopus tropicalis (Western clawed frog).